Reading from the N-terminus, the 260-residue chain is Acetylglutamate kinase (260 aa).

Residues 46–47 (GG), Arg68, and Asn160 contribute to the substrate site.

It belongs to the acetylglutamate kinase family. ArgB subfamily.

It localises to the cytoplasm. It carries out the reaction N-acetyl-L-glutamate + ATP = N-acetyl-L-glutamyl 5-phosphate + ADP. The protein operates within amino-acid biosynthesis; L-arginine biosynthesis; N(2)-acetyl-L-ornithine from L-glutamate: step 2/4. Its function is as follows. Catalyzes the ATP-dependent phosphorylation of N-acetyl-L-glutamate. The sequence is that of Acetylglutamate kinase from Shewanella sp. (strain ANA-3).